The primary structure comprises 98 residues: Small ribosomal subunit protein uS17 (98 aa).

Positions M1–K21 are disordered. K96 is covalently cross-linked (Isoglutamyl lysine isopeptide (Lys-Gln) (interchain with Q-Cter in protein Pup)).

This sequence belongs to the universal ribosomal protein uS17 family. In terms of assembly, part of the 30S ribosomal subunit.

Its function is as follows. One of the primary rRNA binding proteins, it binds specifically to the 5'-end of 16S ribosomal RNA. The polypeptide is Small ribosomal subunit protein uS17 (rpsQ) (Mycolicibacterium smegmatis (strain ATCC 700084 / mc(2)155) (Mycobacterium smegmatis)).